The sequence spans 385 residues: MTKIFRKSNPLNKMINSSLIDLPSPSNISYLWNFGSLTGLCLALQIISGLLLTMHFSPSINLAFDSTVHIVRDVYGGWFIRNVHISGASLFFTCMFIHIGRGIYYGSFKNLKTWYSGVILFILSMLTAFLGYVLPWGQMSFWAATVITNLLSAVPMMGGTLVETVWGGYSVGDPTLKRFLVLHFLMPFSMIAVSLIHLVFLHETGSNNPMGINPNMDKIPFHPYLSFKDILGFSFLLTFLITFSLLLPYLTTDPDNFSPANSMVTPPHIKPEWYFLFAYSILRAIPNKLAGIIALVMSLSVLLLMPILIRSNKRSMTFMPLMQVTFWLMVCNFIFLSWLGAMPLEPPFILMSQISSFIYFFIFFVMFPLISRNEDKILEFHAMYS.

4 helical membrane-spanning segments follow: residues 34-54 (FGSL…LLTM), 78-99 (WFIR…FIHI), 114-134 (WYSG…GYVL), and 179-199 (FLVL…IHLV). The heme b site is built by histidine 84 and histidine 98. 2 residues coordinate heme b: histidine 183 and histidine 197. Residue histidine 202 participates in a ubiquinone binding. Transmembrane regions (helical) follow at residues 227–247 (FKDI…SLLL), 289–309 (LAGI…PILI), 321–341 (LMQV…WLGA), and 348–368 (FILM…VMFP).

It belongs to the cytochrome b family. As to quaternary structure, the cytochrome bc1 complex contains 3 respiratory subunits (MT-CYB, CYC1 and UQCRFS1), 2 core proteins (UQCRC1 and UQCRC2) and probably 6 low-molecular weight proteins. Requires heme b as cofactor.

The protein resides in the mitochondrion inner membrane. In terms of biological role, component of the ubiquinol-cytochrome c reductase complex (complex III or cytochrome b-c1 complex) that is part of the mitochondrial respiratory chain. The b-c1 complex mediates electron transfer from ubiquinol to cytochrome c. Contributes to the generation of a proton gradient across the mitochondrial membrane that is then used for ATP synthesis. The polypeptide is Cytochrome b (MT-CYB) (Eptatretus burgeri (Inshore hagfish)).